Here is a 312-residue protein sequence, read N- to C-terminus: Methionyl-tRNA formyltransferase (312 aa).

110–113 contributes to the (6S)-5,6,7,8-tetrahydrofolate binding site; sequence SLLP.

The protein belongs to the Fmt family.

The catalysed reaction is L-methionyl-tRNA(fMet) + (6R)-10-formyltetrahydrofolate = N-formyl-L-methionyl-tRNA(fMet) + (6S)-5,6,7,8-tetrahydrofolate + H(+). Its function is as follows. Attaches a formyl group to the free amino group of methionyl-tRNA(fMet). The formyl group appears to play a dual role in the initiator identity of N-formylmethionyl-tRNA by promoting its recognition by IF2 and preventing the misappropriation of this tRNA by the elongation apparatus. The chain is Methionyl-tRNA formyltransferase from Mycobacterium marinum (strain ATCC BAA-535 / M).